The sequence spans 61 residues: UPF0434 protein PSPPH_1629 (61 aa).

Belongs to the UPF0434 family.

The polypeptide is UPF0434 protein PSPPH_1629 (Pseudomonas savastanoi pv. phaseolicola (strain 1448A / Race 6) (Pseudomonas syringae pv. phaseolicola (strain 1448A / Race 6))).